Reading from the N-terminus, the 311-residue chain is Reaction center protein L chain (311 aa).

The next 3 membrane-spanning stretches (helical) occupy residues 68-90 (FWGF…ETIL), 123-151 (GFAW…SMKL), and 156-178 (HVPI…RPIA). (7R,8Z)-bacteriochlorophyll b is bound by residues His183 and His213. A helical membrane pass occupies residues 211–238 (PFHAIGITGLFASTWLLACHGSLILSAA). Fe cation is bound at residue His230. Phe253 lines the a ubiquinone pocket. A helical transmembrane segment spans residues 262–287 (GESGVHRLGYIFAIGGILSADLCILL). His267 is a binding site for Fe cation.

The protein belongs to the reaction center PufL/M/PsbA/D family. As to quaternary structure, reaction center is composed of four bacteriochlorophylls, two bacteriopheophytins, two ubiquinones, one iron, and two highly hydrophobic polypeptide chains (designated L and M).

It is found in the cell membrane. The reaction center is a membrane-bound complex that mediates the initial photochemical event in the electron transfer process of photosynthesis. The polypeptide is Reaction center protein L chain (pufL) (Chloroflexus aurantiacus (strain ATCC 29366 / DSM 635 / J-10-fl)).